The following is a 70-amino-acid chain: Large ribosomal subunit protein eL38 (70 aa).

Belongs to the eukaryotic ribosomal protein eL38 family.

This is Large ribosomal subunit protein eL38 (RpL38) from Julodis onopordi (Jewel beetle).